Reading from the N-terminus, the 59-residue chain is Large ribosomal subunit protein bL32 (59 aa).

The segment at 1-20 is disordered; that stretch reads MAVPRNRHSNARKNIRRSHH.

The protein belongs to the bacterial ribosomal protein bL32 family.

The sequence is that of Large ribosomal subunit protein bL32 from Chlamydia trachomatis serovar A (strain ATCC VR-571B / DSM 19440 / HAR-13).